A 351-amino-acid polypeptide reads, in one-letter code: Anthranilate phosphoribosyltransferase (351 aa).

Residues glycine 80, 83 to 84, threonine 88, 90 to 93, 108 to 116, and serine 120 each bind 5-phospho-alpha-D-ribose 1-diphosphate; these read GD, NIST, and KHGNRSVTS. Glycine 80 contributes to the anthranilate binding site. Serine 92 serves as a coordination point for Mg(2+). Anthranilate is bound at residue asparagine 111. Arginine 166 serves as a coordination point for anthranilate. Mg(2+) is bound by residues aspartate 229 and glutamate 230.

This sequence belongs to the anthranilate phosphoribosyltransferase family. Homodimer. Requires Mg(2+) as cofactor.

The enzyme catalyses N-(5-phospho-beta-D-ribosyl)anthranilate + diphosphate = 5-phospho-alpha-D-ribose 1-diphosphate + anthranilate. It functions in the pathway amino-acid biosynthesis; L-tryptophan biosynthesis; L-tryptophan from chorismate: step 2/5. Functionally, catalyzes the transfer of the phosphoribosyl group of 5-phosphorylribose-1-pyrophosphate (PRPP) to anthranilate to yield N-(5'-phosphoribosyl)-anthranilate (PRA). This Chlorobium phaeovibrioides (strain DSM 265 / 1930) (Prosthecochloris vibrioformis (strain DSM 265)) protein is Anthranilate phosphoribosyltransferase.